Reading from the N-terminus, the 406-residue chain is CinA-like protein (406 aa).

It belongs to the CinA family.

In Deinococcus geothermalis (strain DSM 11300 / CIP 105573 / AG-3a), this protein is CinA-like protein.